The chain runs to 1084 residues: Myosin heavy chain, skeletal muscle (1084 aa).

Disordered stretches follow at residues 1–20, 270–292, and 298–317; these read SAET…KTKE, EIEA…SREL, and RLEE…KKRE. The tract at residues 1-258 is alpha-helical tailpiece (S2); it reads SAETEKEMAN…SKIEDEQALM (258 aa). A rodlike tail (S2 and LMM domains) region spans residues 259-1084; sequence TNLQRIEELE…DVHSKVISEE (826 aa). Residues 273-292 are compositionally biased toward basic and acidic residues; sequence AERASRAKAEKQRSDLSREL. The stretch at 455–1084 forms a coiled coil; it reads QAFTQQIEGL…DVHSKVISEE (630 aa).

Muscle myosin is a hexameric protein that consists of 2 heavy chain subunits (MHC), 2 alkali light chain subunits (MLC) and 2 regulatory light chain subunits (MLC-2).

The protein localises to the cytoplasm. It is found in the myofibril. Functionally, muscle contraction. This Oryctolagus cuniculus (Rabbit) protein is Myosin heavy chain, skeletal muscle.